A 1163-amino-acid polypeptide reads, in one-letter code: Pesticidal crystal protein Cry26Aa (1163 aa).

This sequence belongs to the delta endotoxin family.

Promotes colloidosmotic lysis by binding to the midgut epithelial cells of insects. The protein is Pesticidal crystal protein Cry26Aa (cry26Aa) of Bacillus thuringiensis subsp. finitimus.